We begin with the raw amino-acid sequence, 306 residues long: UDP-3-O-acyl-N-acetylglucosamine deacetylase (306 aa).

The Zn(2+) site is built by H79, H239, and D243. H266 serves as the catalytic Proton donor.

This sequence belongs to the LpxC family. It depends on Zn(2+) as a cofactor.

It carries out the reaction a UDP-3-O-[(3R)-3-hydroxyacyl]-N-acetyl-alpha-D-glucosamine + H2O = a UDP-3-O-[(3R)-3-hydroxyacyl]-alpha-D-glucosamine + acetate. Its pathway is glycolipid biosynthesis; lipid IV(A) biosynthesis; lipid IV(A) from (3R)-3-hydroxytetradecanoyl-[acyl-carrier-protein] and UDP-N-acetyl-alpha-D-glucosamine: step 2/6. Catalyzes the hydrolysis of UDP-3-O-myristoyl-N-acetylglucosamine to form UDP-3-O-myristoylglucosamine and acetate, the committed step in lipid A biosynthesis. The chain is UDP-3-O-acyl-N-acetylglucosamine deacetylase from Actinobacillus pleuropneumoniae serotype 7 (strain AP76).